Here is a 267-residue protein sequence, read N- to C-terminus: U6 snRNA phosphodiesterase 1 (267 aa).

The tract at residues Met1 to Arg72 is disordered. His122 serves as the catalytic Proton acceptor. His122 to Ser124 is a binding site for AMP. UMP is bound by residues Gln166, Tyr204, and Ser208 to Ser212. Residues Tyr204 and Asp206–Ser212 each bind AMP. His210 acts as the Proton donor in catalysis.

This sequence belongs to the 2H phosphoesterase superfamily. USB1 family. Interacts with PLRG1, CDC5L and PRPF19.

The protein localises to the nucleus. The enzyme catalyses a 3'-end uridylyl-uridine-RNA = a 3'-end 2',3'-cyclophospho-uridine-RNA + uridine. It carries out the reaction a 3'-end uridylyl-adenosine-RNA = a 3'-end 2',3'-cyclophospho-uridine-RNA + adenosine. In terms of biological role, 3'-5' RNA exonuclease that trims the 3' end of oligo(U) and oligo(A) tracts of the pre-U6 small nuclear RNA (snRNA) molecule, leading to the formation of a mature U6 snRNA 3' end-terminated with a 2',3'-cyclic phosphate. Participates in the U6 snRNA 3' end processing that prevents U6 snRNA degradation. In addition also removes uridines from the 3' end of U6atac snRNA and possibly the vault RNA VTRNA1-1. The sequence is that of U6 snRNA phosphodiesterase 1 from Rattus norvegicus (Rat).